Reading from the N-terminus, the 826-residue chain is Homeobox-leucine zipper protein HDG5 (826 aa).

2 disordered regions span residues 1 to 34 and 69 to 119; these read MLTM…IQNP and EMME…HRHT. Over residues 23–34 the composition is skewed to low complexity; the sequence is PSSSSPGTIQNP. Residues 88–105 are compositionally biased toward basic and acidic residues; the sequence is EDPKFGNESDVNELHDDE. Positions 110–119 are enriched in basic residues; the sequence is AKKKRYHRHT. The homeobox DNA-binding region spans 111 to 170; it reads KKKRYHRHTNRQIQEMEALFKENPHPDDKQRKRLSAELGLKPRQVKFWFQNRRTQMKAQQ. Positions 165–189 form a coiled coil; that stretch reads QMKAQQDRNENVMLRAENDNLKSEN. Residues 314–558 form the START domain; sequence ADEEKVIAME…LQRQCERIAS (245 aa).

This sequence belongs to the HD-ZIP homeobox family. Class IV subfamily. Expressed in shoot apical meristem (SAM) with higher levels in L1 cells and the epidermal layer of young leaves. Expressed in the L1 of apical inflorescence meristems, early flower primordia, carpel and stamen filament epidermis, ovule primordia, nucellus and chalaze.

Its subcellular location is the nucleus. Probable transcription factor. Involved, together with PDF2, in the regulation of flower organs development by promoting the expression of APETALA 3 (AP3) in the epidermis and internal cell layers of developing flowers. In Arabidopsis thaliana (Mouse-ear cress), this protein is Homeobox-leucine zipper protein HDG5.